The following is a 376-amino-acid chain: Glutamate 5-kinase (376 aa).

Lys15 is an ATP binding site. Positions 56, 143, and 155 each coordinate substrate. An ATP-binding site is contributed by 175–176 (SD). The PUA domain maps to 281–358 (KGTLTIDAGA…PDVMSILGVS (78 aa)).

Belongs to the glutamate 5-kinase family.

Its subcellular location is the cytoplasm. The catalysed reaction is L-glutamate + ATP = L-glutamyl 5-phosphate + ADP. The protein operates within amino-acid biosynthesis; L-proline biosynthesis; L-glutamate 5-semialdehyde from L-glutamate: step 1/2. In terms of biological role, catalyzes the transfer of a phosphate group to glutamate to form L-glutamate 5-phosphate. The sequence is that of Glutamate 5-kinase from Rhodopseudomonas palustris (strain HaA2).